Reading from the N-terminus, the 159-residue chain is UPF0336 protein ML1910 (159 aa).

This sequence belongs to the UPF0336 family.

In Mycobacterium leprae (strain TN), this protein is UPF0336 protein ML1910.